A 329-amino-acid chain; its full sequence is (12E)-labda-8(17),12,14-triene synthase (329 aa).

Residues D90 and E95 each coordinate Mg(2+). Positions D90–E95 match the DDXXXE motif motif. Position 184 (R184) interacts with substrate. The Mg(2+) site is built by N230 and S234. Residues N230–E238 carry the NXXXSXXXE motif motif. R237 is a substrate binding site. Residue E238 coordinates Mg(2+). R316–Y317 provides a ligand contact to substrate.

It belongs to the terpene synthase family. Mg(2+) serves as cofactor.

It catalyses the reaction (+)-copalyl diphosphate = (12E)-labda-8(17),12,14-triene + diphosphate. Functionally, involved in the biosynthesis of the mercapturic acid derivative diterpene cyslabdan A, a potentiator of the beta-lactam antibiotic imipenem. Catalyzes the conversion of (+)-copalyl diphosphate to yield labda-8(17),12(E),14-triene (biformene). The chain is (12E)-labda-8(17),12,14-triene synthase from Streptomyces cyslabdanicus.